The following is a 79-amino-acid chain: Calcium/calmodulin-dependent protein kinase II inhibitor 2 (79 aa).

The interval 43 to 69 is inhibitory domain; that stretch reads KRPPKLGQIGRAKRVVIEDDRIDEVLK.

It belongs to the CAMK2N family.

The protein resides in the nucleus. It localises to the cytoplasm. The protein localises to the cytosol. Potent and specific cellular inhibitor of CaM-kinase II (CAMK2). Traps Ca(2+)/calmodulin on CAMK2. The chain is Calcium/calmodulin-dependent protein kinase II inhibitor 2 (camk2n2) from Xenopus laevis (African clawed frog).